Reading from the N-terminus, the 470-residue chain is 1-aminocyclopropane-1-carboxylate synthase 5 (470 aa).

The substrate site is built by glutamate 47 and tyrosine 85. N6-(pyridoxal phosphate)lysine is present on lysine 272. The residue at position 461 (serine 461) is a Phosphoserine.

Belongs to the class-I pyridoxal-phosphate-dependent aminotransferase family. As to quaternary structure, homodimer and heterodimer. In vivo, the relevance of heterodimerization with other ACS enzymes is however unsure. Interacts (via its C-terminal region) with FEI1, FEI2, ETO1, EOL1 and EOL2. Interacts with GRF3. Pyridoxal 5'-phosphate is required as a cofactor. May be processed at its C-terminus. Post-translationally, ubiquitinated. The interaction with ETO1 (and possibly EOL1 and EOL2) mediate its proteasome-dependent degradation. Its stability and degradation plays a central role in ethylene biosynthesis. As to expression, expressed in roots and siliques.

It carries out the reaction S-adenosyl-L-methionine = 1-aminocyclopropane-1-carboxylate + S-methyl-5'-thioadenosine + H(+). Its pathway is alkene biosynthesis; ethylene biosynthesis via S-adenosyl-L-methionine; ethylene from S-adenosyl-L-methionine: step 1/2. Functionally, 1-aminocyclopropane-1-carboxylate synthase (ACS) enzymes catalyze the conversion of S-adenosyl-L-methionine (SAM) into 1-aminocyclopropane-1-carboxylate (ACC), a direct precursor of ethylene. The chain is 1-aminocyclopropane-1-carboxylate synthase 5 (ACS5) from Arabidopsis thaliana (Mouse-ear cress).